The chain runs to 88 residues: SPbeta prophage-derived protein BhlB (88 aa).

The next 2 membrane-spanning stretches (helical) occupy residues 15-35 (LLAIALLNQIMVMLGKAAFII) and 45-65 (DCLYTIFTIVFTTSTTTAAWF).

The protein belongs to the SPP1 holin family.

It is found in the cell membrane. Its function is as follows. May be involved in the secretion of the autolysin BlyA. The sequence is that of SPbeta prophage-derived protein BhlB (bhlB) from Bacillus subtilis (strain 168).